The following is a 252-amino-acid chain: Chitooligosaccharide deacetylase (252 aa).

His-61 and His-125 together coordinate Mg(2+).

It belongs to the YdjC deacetylase family. ChbG subfamily. As to quaternary structure, homodimer. Mg(2+) is required as a cofactor.

It is found in the cytoplasm. It carries out the reaction N,N'-diacetylchitobiose + H2O = N-acetyl-beta-D-glucosaminyl-(1-&gt;4)-D-glucosamine + acetate. The catalysed reaction is diacetylchitobiose-6'-phosphate + H2O = N'-monoacetylchitobiose-6'-phosphate + acetate. The protein operates within glycan degradation; chitin degradation. Its function is as follows. Involved in the degradation of chitin. ChbG is essential for growth on the acetylated chitooligosaccharides chitobiose and chitotriose but is dispensable for growth on cellobiose and chitosan dimer, the deacetylated form of chitobiose. Deacetylation of chitobiose-6-P and chitotriose-6-P is necessary for both the activation of the chb promoter by the regulatory protein ChbR and the hydrolysis of phosphorylated beta-glucosides by the phospho-beta-glucosidase ChbF. Catalyzes the removal of only one acetyl group from chitobiose-6-P to yield monoacetylchitobiose-6-P, the inducer of ChbR and the substrate of ChbF. The protein is Chitooligosaccharide deacetylase of Escherichia coli O45:K1 (strain S88 / ExPEC).